Here is a 207-residue protein sequence, read N- to C-terminus: Large ribosomal subunit protein bL25 (207 aa).

The protein belongs to the bacterial ribosomal protein bL25 family. CTC subfamily. In terms of assembly, part of the 50S ribosomal subunit; part of the 5S rRNA/L5/L18/L25 subcomplex. Contacts the 5S rRNA. Binds to the 5S rRNA independently of L5 and L18.

Its function is as follows. This is one of the proteins that binds to the 5S RNA in the ribosome where it forms part of the central protuberance. This is Large ribosomal subunit protein bL25 from Paraburkholderia xenovorans (strain LB400).